The following is a 384-amino-acid chain: Alcohol dehydrogenase class-3 (384 aa).

Positions 48, 70, 100, 103, 106, 114, and 177 each coordinate Zn(2+).

This sequence belongs to the zinc-containing alcohol dehydrogenase family. Class-III subfamily. As to quaternary structure, homodimer. Zn(2+) serves as cofactor.

It is found in the cytoplasm. It catalyses the reaction a primary alcohol + NAD(+) = an aldehyde + NADH + H(+). The catalysed reaction is a secondary alcohol + NAD(+) = a ketone + NADH + H(+). It carries out the reaction S-(hydroxymethyl)glutathione + NADP(+) = S-formylglutathione + NADPH + H(+). The enzyme catalyses S-(hydroxymethyl)glutathione + NAD(+) = S-formylglutathione + NADH + H(+). In terms of biological role, class-III ADH is remarkably ineffective in oxidizing ethanol, but it readily catalyzes the oxidation of long-chain primary alcohols and the oxidation of S-(hydroxymethyl) glutathione. Plays a role in the calcium flux to the cytoplasm in the ASJ sensory neurons upon removal of a nitric oxide stimulus. This chain is Alcohol dehydrogenase class-3, found in Caenorhabditis elegans.